Consider the following 1065-residue polypeptide: NLR family CARD domain-containing protein 3 (1065 aa).

A compositionally biased stretch (basic and acidic residues) spans 1–10 (MRKQEVRTGR). The tract at residues 1 to 62 (MRKQEVRTGR…PLGPCSNDSR (62 aa)) is disordered. An NACHT domain is found at 139 to 460 (RVSITIGVAG…YCFTHLSLQE (322 aa)). 145–152 (GVAGMGKT) is an ATP binding site. A TRAF6-binding motif is present at residues 457-460 (SLQE). LRR repeat units follow at residues 617-639 (EANL…LLYC), 641-663 (KLRL…VLSG), 665-688 (DCRI…ALAR), 693-716 (NRSL…ALAD), 721-744 (NRTL…SMAE), 749-772 (NRTL…RMAD), 777-800 (NRSL…ALAE), 805-828 (NQGL…ALMG), 833-856 (NQTL…AIAH), 861-884 (NSTL…AIAV), 889-912 (NRTL…ALGQ), 917-940 (NRSL…AVAR), 945-968 (NTAL…VLGE), 973-996 (NRTL…ALAN), 1001-1029 (NSSL…LSGN), and 1031-1052 (RLQH…MISE).

Belongs to the NLRP family. As to quaternary structure, directly interacts (via CARD) with TMEM173/STING; this interaction reduces TMEM173 trafficking to the perinuclear region in response to interferon stimulatory DNA. Also interacts, but to a lesser extent, with TBK1. Interacts with TRAF6; this interaction results in decreased TRAF6 'Lys-63'-linked polyubiquitination, but leaves 'Lys-48'-linked chains unchanged, promoting TRAF6 protein degradation. Interacts with PIK3R1/PIK3R2; this interaction disrupts the association between PIK3R1/PIK3R2 and the p110 catalytic subunit PIK3CA/PIK3CB/PIK3CD and reduces PIK3R1/PIK3R2 activation. Weakly interacts with PYCARD/ASC. Interacts with CASP1 and CASP5.

Its subcellular location is the cytoplasm. In terms of biological role, negative regulator of the innate immune response. Attenuates signaling pathways activated by Toll-like receptors (TLRs) and the DNA sensor STING/TMEM173 in response to pathogen-associated molecular patterns, such as intracellular poly(dA:dT), but not poly(I:C), or in response to DNA virus infection, including that of Herpes simplex virus 1 (HSV1). May affect TLR4 signaling by acting at the level of TRAF6 ubiquitination, decreasing the activating 'Lys-63'-linked ubiquitination and leaving unchanged the degradative 'Lys-48'-linked ubiquitination. Inhibits the PI3K-AKT-mTOR pathway possibly by directly interacting with the posphatidylinositol 3-kinase regulatory subunit p85 (PIK3R1/PIK3R2) and disrupting the association between PIK3R1/PIK3R2 and the catalytic subunit p110 (PIK3CA/PIK3CB/PIK3CD) and reducing PIK3R1/PIK3R2 activation. Via its regulation of the PI3K-AKT-mTOR pathway, controls cell proliferation, predominantly in intestinal epithelial cells. May also affect NOD1- or NOD2-mediated NF-kappa-B activation. Might also affect the inflammatory response by preventing NLRP3 inflammasome formation, CASP1 cleavage and IL1B maturation. This chain is NLR family CARD domain-containing protein 3 (NLRC3), found in Homo sapiens (Human).